The primary structure comprises 464 residues: Protein FAM90A16 (464 aa).

Disordered stretches follow at residues 1–42 (MMAR…DPRL), 70–389 (PATL…HDGA), and 415–437 (HSPE…SEAP). 2 stretches are compositionally biased toward basic and acidic residues: residues 74-89 (GKKE…KPRV) and 97-114 (NKDK…DPQR). Residues 180–197 (LASLSPLRKASLSSSSSL) are compositionally biased toward low complexity.

This sequence belongs to the FAM90 family.

This Homo sapiens (Human) protein is Protein FAM90A16.